Here is a 550-residue protein sequence, read N- to C-terminus: Transcriptional repressor RHIT (550 aa).

3 disordered regions span residues 1–67 (MSAD…ETRA), 174–200 (VQGK…VVEV), and 216–296 (KSFK…EGLA). Composition is skewed to basic and acidic residues over residues 11-22 (AQDKERARETPG), 45-58 (ESPH…EPHP), and 187-200 (LGHE…VVEV). In terms of domain architecture, KRAB spans 124 to 193 (VTFEDMALYL…SRQLGHEEEE (70 aa)). A Glycyl lysine isopeptide (Lys-Gly) (interchain with G-Cter in SUMO2) cross-link involves residue Lys-216. Basic and acidic residues predominate over residues 267-281 (DLPKTQEGHFPEQPR). A Phosphoserine modification is found at Ser-290. 8 C2H2-type zinc fingers span residues 306–328 (YKCE…RRTH), 334–356 (YACT…QIIH), 362–384 (YTCP…QRIH), 390–412 (YVCD…QGTH), 418–440 (HKCP…QRTH), 446–468 (YPCP…NRTH), 474–496 (YHCL…QRTH), and 502–524 (YSCP…EKIH).

The protein belongs to the krueppel C2H2-type zinc-finger protein family.

The protein resides in the nucleus. In terms of biological role, transcriptional repressor involved in regulating MPV17L expression. By regulating MPV17L expression, contributes to the regulation of genes involved in H(2)O(2) metabolism and the mitochondrial apoptotic cascade. This is Transcriptional repressor RHIT (ZNF205) from Bos taurus (Bovine).